We begin with the raw amino-acid sequence, 524 residues long: Phytoene desaturase (neurosporene-forming) (524 aa).

FAD is bound at residue 12–45 (VVIGAGLGGLAAAMRLGAKGYKVTVVDRLDRPGG). The segment at 500–524 (PDAPKPETPAAAAPKARTPRAKAAQ) is disordered. Residues 507 to 524 (TPAAAAPKARTPRAKAAQ) show a composition bias toward low complexity.

The protein belongs to the carotenoid/retinoid oxidoreductase family. It depends on FAD as a cofactor.

It catalyses the reaction 15-cis-phytoene + 3 A = all-trans-neurosporene + 3 AH2. It participates in carotenoid biosynthesis. With respect to regulation, is inhibited by diphenylamine (DPA). Is also slightly inhibited by NAD, NADP or ATP in the presence of FAD. Functionally, converts phytoene into all-trans-neurosporene as the major product, via the intermediary of phytofluene and zeta-carotene, by the introduction of three double bonds. Both intermediates, phytofluene and zeta-carotene, can be used as substrates and converted to neurosporene. 1,2-epoxy phytoene is also a suitable substrate whereas the C30 diapophytoene is not. The protein is Phytoene desaturase (neurosporene-forming) (crtI) of Rhodobacter capsulatus (strain ATCC BAA-309 / NBRC 16581 / SB1003).